The primary structure comprises 324 residues: Acetyl-coenzyme A carboxylase carboxyl transferase subunit alpha (324 aa).

One can recognise a CoA carboxyltransferase C-terminal domain in the interval 44 to 297 (LEERAKQLRY…KAALLRNLAE (254 aa)).

The protein belongs to the AccA family. Acetyl-CoA carboxylase is a heterohexamer composed of biotin carboxyl carrier protein (AccB), biotin carboxylase (AccC) and two subunits each of ACCase subunit alpha (AccA) and ACCase subunit beta (AccD).

Its subcellular location is the cytoplasm. The catalysed reaction is N(6)-carboxybiotinyl-L-lysyl-[protein] + acetyl-CoA = N(6)-biotinyl-L-lysyl-[protein] + malonyl-CoA. The protein operates within lipid metabolism; malonyl-CoA biosynthesis; malonyl-CoA from acetyl-CoA: step 1/1. Functionally, component of the acetyl coenzyme A carboxylase (ACC) complex. First, biotin carboxylase catalyzes the carboxylation of biotin on its carrier protein (BCCP) and then the CO(2) group is transferred by the carboxyltransferase to acetyl-CoA to form malonyl-CoA. The sequence is that of Acetyl-coenzyme A carboxylase carboxyl transferase subunit alpha from Thermosynechococcus vestitus (strain NIES-2133 / IAM M-273 / BP-1).